The primary structure comprises 581 residues: Proteasome-associated ATPase (581 aa).

The disordered stretch occupies residues 1–28; sequence MTSSDLTQRKGLTMSDSTPDTPRSTPED. Polar residues predominate over residues 14 to 24; sequence MSDSTPDTPRS. Residues 27–66 adopt a coiled-coil conformation; it reads EDAARRLAVLSAQNERLAQVLGEARGKIVELQQQIEEFAK. Residue 248-253 coordinates ATP; sequence GCGKTL. The segment at 561–581 is disordered; it reads GSGRSAAGRTIETATSTGQYL. Residues 572–581 are compositionally biased toward polar residues; it reads ETATSTGQYL. Residues 580–581 are docks into pockets in the proteasome alpha-ring; it reads YL.

The protein belongs to the AAA ATPase family. As to quaternary structure, homohexamer. Assembles into a hexameric ring structure that caps the 20S proteasome core. Strongly interacts with the prokaryotic ubiquitin-like protein Pup through a hydrophobic interface; the interacting region of ARC lies in its N-terminal coiled-coil domain. There is one Pup binding site per ARC hexamer ring. Upon ATP-binding, the C-terminus of ARC interacts with the alpha-rings of the proteasome core, possibly by binding to the intersubunit pockets.

Its pathway is protein degradation; proteasomal Pup-dependent pathway. In terms of biological role, ATPase which is responsible for recognizing, binding, unfolding and translocation of pupylated proteins into the bacterial 20S proteasome core particle. May be essential for opening the gate of the 20S proteasome via an interaction with its C-terminus, thereby allowing substrate entry and access to the site of proteolysis. Thus, the C-termini of the proteasomal ATPase may function like a 'key in a lock' to induce gate opening and therefore regulate proteolysis. The chain is Proteasome-associated ATPase from Sanguibacter keddieii (strain ATCC 51767 / DSM 10542 / NCFB 3025 / ST-74).